A 144-amino-acid chain; its full sequence is 3-hydroxyacyl-[acyl-carrier-protein] dehydratase FabZ (144 aa).

The active site involves H49.

Belongs to the thioester dehydratase family. FabZ subfamily.

Its subcellular location is the cytoplasm. The catalysed reaction is a (3R)-hydroxyacyl-[ACP] = a (2E)-enoyl-[ACP] + H2O. Its function is as follows. Involved in unsaturated fatty acids biosynthesis. Catalyzes the dehydration of short chain beta-hydroxyacyl-ACPs and long chain saturated and unsaturated beta-hydroxyacyl-ACPs. The chain is 3-hydroxyacyl-[acyl-carrier-protein] dehydratase FabZ from Clostridium kluyveri (strain NBRC 12016).